The chain runs to 225 residues: PKHD-type hydroxylase YbiX (225 aa).

A Fe2OG dioxygenase domain is found at 78–177 (TLSTPLFNRY…RVASFMWIQS (100 aa)). Positions 96, 98, and 158 each coordinate Fe cation. Position 168 (Arg168) interacts with 2-oxoglutarate.

Requires Fe(2+) as cofactor. L-ascorbate is required as a cofactor.

The protein is PKHD-type hydroxylase YbiX of Shigella boydii serotype 4 (strain Sb227).